A 671-amino-acid chain; its full sequence is Copper amine oxidase 1 (671 aa).

The segment at 3–106 (PHPLAILSEE…QHRVVGKEHH (104 aa)) is N2. An N3 region spans residues 107-211 (ASLTLSEFDT…DRPATGGKGE (105 aa)). 319-330 (AFDFGDGGGGNM) is a binding site for substrate. Asp-321 acts as the Proton acceptor in catalysis. A disulfide bridge links Cys-340 with Cys-366. 402–407 (LANYEY) serves as a coordination point for substrate. Tyr-405 acts as the Schiff-base intermediate with substrate; via topaquinone in catalysis. Tyr-405 bears the 2',4',5'-topaquinone mark. 2 residues coordinate Cu cation: His-455 and His-457. Asp-464 provides a ligand contact to Mn(2+). The N-linked (GlcNAc...) asparagine glycan is linked to Asn-471. Residue Asp-606 participates in Mn(2+) binding. Residue His-617 participates in Cu cation binding.

Belongs to the copper/topaquinone oxidase family. In terms of assembly, homodimer. Cu cation serves as cofactor. Requires Zn(2+) as cofactor. It depends on L-topaquinone as a cofactor. The cofactor is Mn(2+). In terms of processing, topaquinone (TPQ) is generated by copper-dependent autoxidation of a specific tyrosyl residue.

The catalysed reaction is histamine + O2 + H2O = imidazole-4-acetaldehyde + H2O2 + NH4(+). This Aspergillus niger protein is Copper amine oxidase 1 (AO-I).